Here is a 924-residue protein sequence, read N- to C-terminus: MDSTNGNGADLESANGANGSGVTEALPPPPPVIPPNVEPVRVKTELAEKKGPVRVPMARKGFGTRGQKIPLLTNHFKVDVANLQGHFFHYSVALFYDDGRPVEQKGVGRKILDKVHQTYHSDLDGKEFAYDGEKTLFTYGALPSNKMDFSVVLEEVSATRANGNGSPNGNESPSDGDRKRLRRPNRSKNFRVEISYAAKIPLQALANAMRGQESENSQEAIRVLDIILRQHAARQGCLLVRQSFFHNDPTNCEPVGGNILGCRGFHSSFRTTQGGMSLNMDVTTTMIIKPGPVVDFLIANQNARDPYSIDWSKAKRTLKNLRVKVSPSGQEFKITGLSDKPCREQTFELKKRNPNENGEFETTEVTVADYFRDTRHIDLQYSADLPCINVGKPKRPTYIPLELCALVPLQRYTKALTTFQRSALVEKSRQKPQERMTVLSKALKVSNYDAEPLLRSCGISISSNFTQVEGRVLPAPKLKMGCGSETFPRNGRWNFNNKEFVEPTKIQRWVVVNFSARCNVRQVVDDLIKIGGSKGIEIASPFQVFEEGNQFRRAPPMIRVENMFKDIQSKLPGVPQFILCVLPDKKNSDLYGPWKKKNLTEFGIVTQCMAPTRQPNDQYLTNLLLKINAKLGGLNSMLSVERTPAFTVISKVPTIILGMDVSHGSPGQSDVPSIAAVVSSREWPLISKYRASVRTQPSKAEMIESLVKKNGTEDDGIIKELLVDFYTSSNKRKPEHIIIFRDGVSESQFNQVLNIELDQIIEACKLLDANWNPKFLLLVAQKNHHTKFFQPTSPENVPPGTIIDNKICHPKNNDFYLCAHAGMIGTTRPTHYHVLYDEIGFSADELQELVHSLSYVYQRSTSAISVVAPICYAHLAAAQLGTFMKFEDQSETSSSHGGITAPGPISVAQLPRLKDNVANSMFFC.

2 disordered regions span residues 1–37 (MDSTNGNGADLESANGANGSGVTEALPPPPPVIPPNV) and 159–185 (TRANGNGSPNGNESPSDGDRKRLRRPN). Over residues 26 to 37 (LPPPPPVIPPNV) the composition is skewed to pro residues. Residues 162-173 (NGNGSPNGNESP) show a composition bias toward low complexity. A PAZ domain is found at 292 to 408 (PVVDFLIANQ…IPLELCALVP (117 aa)). In terms of domain architecture, Piwi spans 577–885 (FILCVLPDKK…AAAQLGTFMK (309 aa)). Residues 584 to 591 (DKKNSDLY) carry the Nuclear localization signal motif.

The protein belongs to the argonaute family. Ago subfamily. In terms of assembly, interacts with NRPE1 (via C-terminus). Binding to NRPE1 is required for its function in RdDM. Interacts with turnip crinkle virus (TCV) capsid protein P38; this interaction inhibits probably RNA silencing ability of AGO4. Interacts with SDE3. Binds to RDM3. Binds chromatin at loci subject to transcriptional silencing. Interacts with MBD6. In terms of tissue distribution, expressed in embryos, mature leaves, vascular tissue of the sepals, stamens and stigma, at the tip of the style and siliques.

The protein localises to the nucleus. It localises to the nucleolus. It is found in the nucleoplasm. Its subcellular location is the cajal body. Functionally, together with RDM3, required for transcriptional gene silencing (TGS) by DNA methylation and repressive histone modifications (H3K9me2) of several chromatin loci. Component of the RISC complex that associate with the small interfering RNA (siRNA) pathway involved in direct cytosine methylation at endogenous DNA repeats. Forms a AGO4/NRPE1/siRNA complex in cajal body, facilitating its function in RNA-directed gene silencing of target loci. Required for CpNpG and asymmetric DNA methylation as well as histone H3 'Lys-9' methylation (H3K9me) at SUP and SN1 loci. May be not required for CpG methylation. Required for the production and maintenance of retrotransposon SN1 and Copia and ribosomal 5S 25 nucleotide siRNAs specialized in gene silencing at chromatin level. Involved in de novo methylation of FWA gene and required for the maintenance of RNA-directed DNA methylation (RdDM) triggered by inverted repeat transgenes. Interacts with miRNA miR390 and miR172, targeting respectively TAS3 and AP2 mRNAs, and mediates cleavage of miRNA targets. Associates mainly with small RNAs of 24 nucleotide in length and preferentially recruits small RNAs with a 5' terminal adenosine. Targeted by the turnip yellows virus (TuYV) protein P0 (via F-box-like domain) for probable proteasome degradation and thereby inactivating AGO4 function in RNA silencing. Required for resistance to the bacterial pathogen P.syringae. Works independently of the RdDM pathway in mediating resistance to P.syringae. RdDM is involved in viral genome methylation as an epigenetic defense against geminiviruses. The protein is Protein argonaute 4 of Arabidopsis thaliana (Mouse-ear cress).